The following is an 819-amino-acid chain: Zinc finger protein with KRAB and SCAN domains 5 (819 aa).

The region spanning Q51–L132 is the SCAN box domain. Glycyl lysine isopeptide (Lys-Gly) (interchain with G-Cter in SUMO2) cross-links involve residues K214, K246, and K302. The region spanning E216–K287 is the KRAB domain. Disordered stretches follow at residues S236–N263 and E283–G340. Basic and acidic residues predominate over residues L240–C249. Residues V329 to G340 show a composition bias toward basic and acidic residues. 9 consecutive C2H2-type zinc fingers follow at residues H341–H363, F369–H391, Y397–H419, Y425–H447, H540–H562, F568–H590, Y596–H618, F624–H646, and H652–H674. K700 is covalently cross-linked (Glycyl lysine isopeptide (Lys-Gly) (interchain with G-Cter in SUMO2)). 3 C2H2-type zinc fingers span residues Y708–H730, H764–H786, and L792–H814. A Glycyl lysine isopeptide (Lys-Gly) (interchain with G-Cter in SUMO2) cross-link involves residue K776.

This sequence belongs to the krueppel C2H2-type zinc-finger protein family. Testis specific.

It is found in the nucleus. May be involved in transcriptional regulation. This Mus musculus (Mouse) protein is Zinc finger protein with KRAB and SCAN domains 5 (Zkscan5).